The chain runs to 1054 residues: FERM, ARHGEF and pleckstrin domain-containing protein 2 (1054 aa).

The FERM domain maps to 44-324; that stretch reads LHLRVKLLDN…EYHTFFRLLD (281 aa). Residues Ser-389 and Ser-439 each carry the phosphoserine modification. The disordered stretch occupies residues 421 to 527; it reads EFKDSSSSLT…GAGMDCEEPR (107 aa). The segment covering 468–492 has biased composition (low complexity); sequence PGPGLSTKSPQPSPSSRKSPLSLSP. In terms of domain architecture, DH spans 535 to 726; that stretch reads EAYFIVKEIL…TEVTTTLQHI (192 aa). The PH 1 domain maps to 755-852; it reads EFIREGCLHK…WMLDLNSAIQ (98 aa). Positions 856–894 are disordered; that stretch reads SGGDTAPALPGRTVCTRPPRSPNEVSLEQESEDDARGVR. In terms of domain architecture, PH 2 spans 929-1026; that stretch reads ENQLSGYLLR…WMEVIQGASS (98 aa). The interval 1029–1054 is disordered; sequence GRAPSIVQDGPQPSSGLEGMVRGKEE.

In terms of assembly, interacts with PLXNA1. Interaction with PLXNA1 or PIP5K1C lowers its guanine nucleotide exchange activity. Dissociates from PLXNA1 when SEMA3A binds to the receptor. Interacts with PIP5K1C via its FERM domain. The interaction with PIP5K1C is enhanced by SEMA3A binding. Interacts with RAC1.

In terms of biological role, functions as a guanine nucleotide exchange factor that activates RAC1. May have relatively low activity. Plays a role in the response to class 3 semaphorins and remodeling of the actin cytoskeleton. Plays a role in TNFSF11-mediated osteoclast differentiation, especially in podosome rearrangement and reorganization of the actin cytoskeleton. Regulates the activation of ITGB3, integrin signaling and cell adhesion. The protein is FERM, ARHGEF and pleckstrin domain-containing protein 2 (FARP2) of Homo sapiens (Human).